Reading from the N-terminus, the 374-residue chain is bZIP transcription factor TRAB1 (374 aa).

Basic and acidic residues predominate over residues 1-13; it reads MDLKDGGGSERRG. Disordered stretches follow at residues 1–23 and 117–142; these read MDLK…AGAA and ASPG…QPTL. The span at 14 to 23 shows a compositional bias: low complexity; the sequence is AAAGAGAGAA. One can recognise a bZIP domain in the interval 286–349; that stretch reads VERRQRRMIK…KNFFPEMQKN (64 aa). A basic motif region spans residues 288-307; that stretch reads RRQRRMIKNRESAARSRARK. The tract at residues 314–335 is leucine-zipper; that stretch reads LEAEVQKLKEQNMELQKKQEEI.

The protein belongs to the bZIP family. Interacts with VP1 (via N-terminus). As to expression, expressed in roots, leaves and embryos.

It is found in the nucleus. Transcription activator that mediates abscisic acid (ABA) signaling. Binds specifically to the ABA-responsive element (ABRE) of the EMP1 and RAB16A gene promoters. This chain is bZIP transcription factor TRAB1, found in Oryza sativa subsp. japonica (Rice).